A 421-amino-acid polypeptide reads, in one-letter code: NAD-specific glutamate dehydrogenase (421 aa).

Substrate contacts are provided by K70 and K94. Catalysis depends on K106, which acts as the Proton donor. NAD(+) contacts are provided by T191 and N222. Residue S355 coordinates substrate.

It belongs to the Glu/Leu/Phe/Val dehydrogenases family. As to quaternary structure, homohexamer.

It catalyses the reaction L-glutamate + NAD(+) + H2O = 2-oxoglutarate + NH4(+) + NADH + H(+). The protein operates within amino-acid degradation; L-glutamate degradation via hydroxyglutarate pathway; crotonoyl-CoA from L-glutamate: step 1/5. The protein is NAD-specific glutamate dehydrogenase of Peptoniphilus asaccharolyticus (Peptostreptococcus asaccharolyticus).